Reading from the N-terminus, the 236-residue chain is Adenosine 5'-phosphosulfate reductase 2 (236 aa).

Residues cysteine 122, cysteine 123, cysteine 205, and cysteine 208 each coordinate [4Fe-4S] cluster. The segment at 216-236 (NDERAGRWAGREKTECGLHQE) is disordered. Cysteine 231 functions as the Nucleophile; cysteine thiosulfonate intermediate in the catalytic mechanism.

It belongs to the PAPS reductase family. CysH subfamily. The cofactor is [4Fe-4S] cluster.

It is found in the cytoplasm. The catalysed reaction is [thioredoxin]-disulfide + sulfite + AMP + 2 H(+) = adenosine 5'-phosphosulfate + [thioredoxin]-dithiol. It participates in sulfur metabolism; hydrogen sulfide biosynthesis; sulfite from sulfate. Its function is as follows. Catalyzes the formation of sulfite from adenosine 5'-phosphosulfate (APS) using thioredoxin as an electron donor. The chain is Adenosine 5'-phosphosulfate reductase 2 from Bacillus subtilis (strain 168).